Here is a 128-residue protein sequence, read N- to C-terminus: Large-conductance mechanosensitive channel (128 aa).

At 1-16 (MNFIKEFREFAMRGNV) the chain is on the cytoplasmic side. A helical membrane pass occupies residues 17–45 (VDMAVGVIIGSAFGKIVSSLVSDIFTPVL). Residues 46–74 (GILTGGIDFKDMKFVLAQAQGDVPAVTLN) are Periplasmic-facing. A helical membrane pass occupies residues 75 to 94 (YGLFIQNVIDFIIIAFAIFM). At 95–128 (MIKVINKVRKPEEKKTAPKAETLLTEIRDLLKNK) the chain is on the cytoplasmic side.

It belongs to the MscL family. Homopentamer.

The protein resides in the cell inner membrane. Channel that opens in response to stretch forces in the membrane lipid bilayer. Forms a nonselective ion channel with a conductance of about 4 nanosiemens. May participate in the regulation of osmotic pressure changes within the cell. This chain is Large-conductance mechanosensitive channel, found in Haemophilus influenzae (strain ATCC 51907 / DSM 11121 / KW20 / Rd).